The primary structure comprises 414 residues: TnpB-like protein MJ1635 (414 aa).

Positions 329, 332, 346, and 349 each coordinate Zn(2+).

It in the N-terminal section; belongs to the transposase 2 family. The protein in the C-terminal section; belongs to the transposase 35 family.

The protein is TnpB-like protein MJ1635 of Methanocaldococcus jannaschii (strain ATCC 43067 / DSM 2661 / JAL-1 / JCM 10045 / NBRC 100440) (Methanococcus jannaschii).